The chain runs to 248 residues: MAGHSKWANIKHRKERQDAKKGKIFTKWIRELTVAARQGGGDPGSNPRLRLALDKALGANMTRDTIDRAVARGVGASDGDDVEELGYEGYGPGGVAIMVETMTDNRNRTAAAVRHAFTKCGGNLGTDGSVAYLFDRKGQISFAAGVDEDALIEAAMEADADDVVTNDDGSIDVFTSFSGFYAVRNALEAAGFKASDAEIVMLPTTSAVLDLETAEKVLKLIDMLEDLDDVQNVYSNAEIPDDVMEQLG.

This sequence belongs to the TACO1 family.

It is found in the cytoplasm. In Pseudomonas savastanoi pv. phaseolicola (strain 1448A / Race 6) (Pseudomonas syringae pv. phaseolicola (strain 1448A / Race 6)), this protein is Probable transcriptional regulatory protein PSPPH_3775.